The following is a 404-amino-acid chain: Glucose-1-phosphate adenylyltransferase (404 aa).

Alpha-D-glucose 1-phosphate contacts are provided by residues Tyr99, Gly164, 179 to 180, and Ser197; that span reads EK.

Belongs to the bacterial/plant glucose-1-phosphate adenylyltransferase family.

It catalyses the reaction alpha-D-glucose 1-phosphate + ATP + H(+) = ADP-alpha-D-glucose + diphosphate. It participates in capsule biogenesis; capsule polysaccharide biosynthesis. The protein operates within glycan biosynthesis; glycogen biosynthesis. In terms of biological role, involved in the biosynthesis of ADP-glucose, a building block, required in the biosynthesis of maltose-1-phosphate (M1P) and in the elongation reactions to produce linear alpha-1,4-glucans. Catalyzes the reaction between ATP and alpha-D-glucose 1-phosphate (G1P) to produce pyrophosphate and ADP-Glc. In Mycobacterium ulcerans (strain Agy99), this protein is Glucose-1-phosphate adenylyltransferase.